Here is a 901-residue protein sequence, read N- to C-terminus: Aconitate hydratase A (901 aa).

Residues C443, C509, and C512 each coordinate [4Fe-4S] cluster.

This sequence belongs to the aconitase/IPM isomerase family. In terms of assembly, monomer. The cofactor is [4Fe-4S] cluster.

The catalysed reaction is citrate = D-threo-isocitrate. It carries out the reaction (2S,3R)-3-hydroxybutane-1,2,3-tricarboxylate = 2-methyl-cis-aconitate + H2O. The protein operates within carbohydrate metabolism; tricarboxylic acid cycle; isocitrate from oxaloacetate: step 2/2. It functions in the pathway organic acid metabolism; propanoate degradation. In terms of biological role, involved in the catabolism of short chain fatty acids (SCFA) via the tricarboxylic acid (TCA)(acetyl degradation route) and probably the 2-methylcitrate cycle I (propionate degradation route). Catalyzes the reversible isomerization of citrate to isocitrate via cis-aconitate. Could catalyze the hydration of 2-methyl-cis-aconitate to yield (2R,3S)-2-methylisocitrate. The apo form of AcnA functions as a RNA-binding regulatory protein. The protein is Aconitate hydratase A (acnA) of Staphylococcus epidermidis (strain ATCC 35984 / DSM 28319 / BCRC 17069 / CCUG 31568 / BM 3577 / RP62A).